Consider the following 1026-residue polypeptide: Unconventional myosin-Ic (1026 aa).

Met-1 is modified (N-acetylmethionine). A Myosin motor domain is found at 12-695; it reads GVQDFLLLEN…TLFITEDALE (684 aa). Residues Asn-53, Tyr-61, 104 to 113, and 157 to 161 each bind ATP; these read SGESGAGKTE and NDNSS. Lys-349 bears the N6-methyllysine mark. Residues 572-594 form an actin-binding region; it reads LAKLMDILMSKEPSYVRCIKPND. IQ domains follow at residues 698–727 and 721–750; these read KQTI…AVIV and IRHA…AADT. A TH1 domain is found at 849–1024; the sequence is KDGYSRSVPK…NGHLSVTTPR (176 aa).

It belongs to the TRAFAC class myosin-kinesin ATPase superfamily. Myosin family. In terms of assembly, interacts (via its IQ motifs) with calm.

It is found in the cytoplasm. The protein resides in the cell cortex. It localises to the cell projection. Its subcellular location is the ruffle membrane. The protein localises to the cytoplasmic vesicle. It is found in the stereocilium membrane. Functionally, myosins are actin-based motor molecules with ATPase activity. Unconventional myosins serve in intracellular movements. Their highly divergent tails are presumed to bind to membranous compartments, which would be moved relative to actin filaments. The chain is Unconventional myosin-Ic (myo1c) from Danio rerio (Zebrafish).